The primary structure comprises 125 residues: Protein ApaG (125 aa).

One can recognise an ApaG domain in the interval M1–H125.

This is Protein ApaG from Salmonella arizonae (strain ATCC BAA-731 / CDC346-86 / RSK2980).